The primary structure comprises 338 residues: UPF0324 membrane protein HI_1643 (338 aa).

Transmembrane regions (helical) follow at residues 5-23 (PFYF…ANYL), 33-55 (HISA…YPQF), 62-84 (GVLF…RLTF), 94-116 (AVVT…GIRY), 123-145 (LVYL…AEPV), 155-177 (VAIA…FYTW), 222-239 (LRVM…WLLT), 254-273 (IPWF…FDLL), 280-302 (LFVE…TTQA), and 312-334 (PLVL…NYGI).

This sequence belongs to the UPF0324 family.

It is found in the cell membrane. This Haemophilus influenzae (strain ATCC 51907 / DSM 11121 / KW20 / Rd) protein is UPF0324 membrane protein HI_1643.